The primary structure comprises 247 residues: Ribosomal RNA small subunit methyltransferase G (247 aa).

S-adenosyl-L-methionine-binding residues include G86, L91, and R154.

The protein belongs to the methyltransferase superfamily. RNA methyltransferase RsmG family.

The protein localises to the cytoplasm. Functionally, specifically methylates the N7 position of a guanine in 16S rRNA. This chain is Ribosomal RNA small subunit methyltransferase G, found in Leptospira biflexa serovar Patoc (strain Patoc 1 / Ames).